The sequence spans 520 residues: Cell adhesion molecule CEACAM2 (520 aa).

The signal sequence occupies residues 1-34; sequence MELASAHLHKGQVPWFGLLLTASLLASWSPPTTA. The region spanning 35–141 is the Ig-like V-type domain; the sequence is QVTVMAFPLH…RVLTGQFHVH (107 aa). Over 35-422 the chain is Extracellular; that stretch reads QVTVMAFPLH…IFDSTYDISD (388 aa). N-linked (GlcNAc...) asparagine glycans are attached at residues Asn-87, Asn-104, Asn-148, Asn-152, Asn-175, Asn-199, Asn-206, Asn-210, Asn-226, Asn-258, Asn-290, Asn-294, Asn-304, Asn-317, Asn-333, and Asn-361. Ig-like C2-type domains are found at residues 145 to 234, 239 to 319, and 327 to 411; these read LKSN…FSLN, PDTP…KNIT, and PSLQ…IKLE. Cys-167 and Cys-217 form a disulfide bridge. A disulfide bridge connects residues Cys-261 and Cys-301. Cys-346 and Cys-394 are disulfide-bonded. Residues 423–443 traverse the membrane as a helical segment; sequence VPIAVIITGAVAGVILIAGLA. The Cytoplasmic portion of the chain corresponds to 444-520; the sequence is YRLCSRKSRW…ETVYSEVKKK (77 aa). Residues 457 to 520 are disordered; that stretch reads QRDLTEHKPS…ETVYSEVKKK (64 aa). Residues 466–480 are compositionally biased toward polar residues; that stretch reads SASNHNLAPSDNSPN. Position 487 is a phosphotyrosine (Tyr-487). A compositionally biased stretch (polar residues) spans 490-513; that stretch reads LNFNSQQPNRPTSAPSSPRATETV. Phosphoserine is present on Ser-502. The residue at position 514 (Tyr-514) is a Phosphotyrosine.

Belongs to the immunoglobulin superfamily. CEA family. In terms of assembly, interacts weakly with MHV spike protein in tissue culture. Isoform 2 is detected in elongating spermatids within the seminiferous epithelium (at protein level). Expressed in kidney, colon, uterus, gut mononuclear cells, crypt epithelia of intestinal tissues, and to a lesser extent, in spleen. Expressed in brain including VMH, globus pallidus, ventral pallidum, striatum, olfactory bulb and hippocampus. Also detected in rectal carcinoma cell line CMT93. Isoform 2 and isoform 3 are expressed in testis. Isoform 2 is detected in seminiferous tubule, not detected in epididymal spermatozoa. Also not observed on spermatogonia, spermatocytes, round spermatids or somatic Sertoli cells. During stages I-VII of spermatogenesis, detected on the elongating spermatids. At spermiation (stage VIII) and subsequent stages IX-XII, levels are drastically reduced or absent in the seminiferous tubules. Sometimes weakly detected in the apical region of stage-VIII seminiferous epithelium. Isoform 2 level is very low in stomach, kidney, intestine, liver and spleen.

The protein localises to the cell membrane. Its function is as follows. Controls energy balance and peripheral insulin action. Involved in the regulation of feeding behavior particularly in the ventromedial nucleus of hypothalamus (VMH) regulation of food intake. Has a role in the regulation of metabolic rate and insulin sensitivity or resistance via effects on brown adipogenesis, sympathetic nervous outflow to brown adipose tissue, spontaneous activity and energy expenditure in skeletal muscle. In case of murine coronavirus (MHV) infection, does probably not serve as functional receptor for the virus. In terms of biological role, isoform 2 may be an adhesion molecule contributing to cell to cell adhesion between elongating spermatids and Sertoli cells within the seminiferous epithelium. The polypeptide is Cell adhesion molecule CEACAM2 (Mus musculus (Mouse)).